The sequence spans 392 residues: Putative nicotinate phosphoribosyltransferase (392 aa).

Nicotinate is bound by residues Tyr-21, Phe-138, and Thr-179. Position 182 is a phosphohistidine (His-182). Arg-235 contacts nicotinate. The 5-phospho-alpha-D-ribose 1-diphosphate site is built by Ser-240, Gly-272, and Thr-293. Cys-330, Cys-333, Cys-348, and Cys-350 together coordinate Zn(2+).

The protein belongs to the NAPRTase family. Highly divergent. In terms of assembly, homodimer. Forms a trimer of dimers in the crystal. Post-translationally, transiently phosphorylated on a His residue during the reaction cycle. Phosphorylation strongly increases the affinity for substrates and increases the rate of nicotinate D-ribonucleotide production. Dephosphorylation regenerates the low-affinity form of the enzyme, leading to product release.

It carries out the reaction nicotinate + 5-phospho-alpha-D-ribose 1-diphosphate + ATP + H2O = nicotinate beta-D-ribonucleotide + ADP + phosphate + diphosphate. Its pathway is cofactor biosynthesis; NAD(+) biosynthesis; nicotinate D-ribonucleotide from nicotinate: step 1/1. In terms of biological role, catalyzes the synthesis of beta-nicotinate D-ribonucleotide from nicotinate and 5-phospho-D-ribose 1-phosphate at the expense of ATP. The polypeptide is Putative nicotinate phosphoribosyltransferase (Thermoplasma acidophilum (strain ATCC 25905 / DSM 1728 / JCM 9062 / NBRC 15155 / AMRC-C165)).